The chain runs to 113 residues: Ig kappa chain V-II region 26-10 (113 aa).

Residues 1–23 (DVVMTQTPLSLPVSLGDQASISC) form a framework-1 region. A disulfide bridge connects residues Cys-23 and Cys-93. The tract at residues 24–39 (RSSQSLVHSNGNTYLN) is complementarity-determining-1. Residues 40-54 (WYLQKAGQSPKLLIY) form a framework-2 region. The segment at 55 to 61 (KVSNRFS) is complementarity-determining-2. The tract at residues 62–93 (GVPDRFSGSGSGTDFTLKISRVEAEDLGIYFC) is framework-3. The segment at 94-102 (SQTTHVPPT) is complementarity-determining-3. Residues 103 to 112 (FGGGTKLEIK) are framework-4.

The protein is Ig kappa chain V-II region 26-10 of Mus musculus (Mouse).